The sequence spans 452 residues: UDP-N-acetylmuramoylalanine--D-glutamate ligase (452 aa).

115 to 121 is an ATP binding site; that stretch reads GTNGKTT.

Belongs to the MurCDEF family.

The protein resides in the cytoplasm. It catalyses the reaction UDP-N-acetyl-alpha-D-muramoyl-L-alanine + D-glutamate + ATP = UDP-N-acetyl-alpha-D-muramoyl-L-alanyl-D-glutamate + ADP + phosphate + H(+). It participates in cell wall biogenesis; peptidoglycan biosynthesis. Functionally, cell wall formation. Catalyzes the addition of glutamate to the nucleotide precursor UDP-N-acetylmuramoyl-L-alanine (UMA). In Elusimicrobium minutum (strain Pei191), this protein is UDP-N-acetylmuramoylalanine--D-glutamate ligase.